The primary structure comprises 680 residues: Viral IRF2-like protein (680 aa).

The IRF tryptophan pentad repeat DNA-binding region spans 7–103; it reads SEWLTDFIID…RPFTIYKGKM (97 aa). Disordered regions lie at residues 156–201, 220–257, 343–365, and 403–423; these read SLRK…SENE, EEPEPSGFGSSGQSSSLLAPDSPRPSTSQVQGPLHVHT, ETASPQGPMQSEGGEEGSTESVS, and ASPQGPMQSEGGEEGSTESVS. Residues 168-188 are compositionally biased toward low complexity; it reads KQAAAVATPTTSSAAEVSSRS. Residues 191–200 show a composition bias toward acidic residues; the sequence is EDTESSDSEN. Residues 220–240 are compositionally biased toward low complexity; the sequence is EEPEPSGFGSSGQSSSLLAPD.

Belongs to the IRF family. Interacts with host EIF2AK2/PKR. Interacts with host USP7.

Its subcellular location is the host nucleus. The protein localises to the host cytoplasm. Its function is as follows. DNA-binding transcription factor that plays a role in the modulation of host immune response. Acts by interacting with host EIF2AK2/PKR and inhibiting its activation. In turn, EIF2AK2/PKR substrates including EIF2S1 or histone H2A are not phosphorylated. Inhibits type I interferon signaling by targeting host IRF3 during viral reactivation from latency. Attenuates the transcriptional activity of host FOXO3 via activation of the AKT1 signaling pathway, inhibiting FOXO3-mediated apoptosis. Also suppresses the expression of viral early lytic genes in both newly infected and reactivated infected host cells allowing regulation of viral life cycle by harnessing the interferon pathway. Mechanistically, promotes host PML bodies formation as well as host antiviral restriction factors IFIT1-3 expression leading to inhibition of viral early lytic proteins. Also regulates host TRAF3 and TRAF6 ubiquitination by interacting with USP7 deubiquitinase thereby influencing TRAF3/6-mediated signal transduction. This Human herpesvirus 8 type P (isolate GK18) (HHV-8) protein is Viral IRF2-like protein (vIRF-2).